The sequence spans 440 residues: Chromosome partition protein MukF (440 aa).

The tract at residues 208–236 (LDETSGNLRELQDTLNAAGDKLQSQLLRI) is leucine-zipper.

The protein belongs to the MukF family. As to quaternary structure, interacts, and probably forms a ternary complex, with MukE and MukB via its C-terminal region. The complex formation is stimulated by calcium or magnesium. It is required for an interaction between MukE and MukB.

The protein localises to the cytoplasm. Its subcellular location is the nucleoid. Its function is as follows. Involved in chromosome condensation, segregation and cell cycle progression. May participate in facilitating chromosome segregation by condensation DNA from both sides of a centrally located replisome during cell division. Not required for mini-F plasmid partitioning. Probably acts via its interaction with MukB and MukE. Overexpression results in anucleate cells. It has a calcium binding activity. The protein is Chromosome partition protein MukF of Histophilus somni (strain 129Pt) (Haemophilus somnus).